The following is a 243-amino-acid chain: Arginine transport ATP-binding protein ArtP (243 aa).

The ABC transporter domain maps to 3–242 (IRVKNLNFFY…KTEQFKHYLS (240 aa)). 35 to 42 (GPSGAGKS) contacts ATP.

This sequence belongs to the ABC transporter superfamily. As to quaternary structure, the complex is composed of two ATP-binding proteins (ArtP), two transmembrane proteins (ArtM and ArtQ) and a solute-binding protein (ArtI).

It is found in the cell inner membrane. It carries out the reaction a polar amino acid(out) + ATP + H2O = a polar amino acid(in) + ADP + phosphate + H(+). The enzyme catalyses L-arginine(out) + ATP + H2O = L-arginine(in) + ADP + phosphate + H(+). In terms of biological role, part of the ABC transporter complex ArtPIQM involved in arginine transport. Probably responsible for energy coupling to the transport system. This Haemophilus influenzae (strain ATCC 51907 / DSM 11121 / KW20 / Rd) protein is Arginine transport ATP-binding protein ArtP (artP).